A 586-amino-acid chain; its full sequence is Asparagine synthetase [glutamine-hydrolyzing] (586 aa).

The For GATase activity role is filled by Cys-2. The Glutamine amidotransferase type-2 domain maps to Cys-2–Gly-185. Residues Arg-50–Ile-54, Asn-75–Glu-77, and Asp-98 each bind L-glutamine. An Asparagine synthetase domain is found at Pro-194–Pro-517. ATP is bound by residues Leu-232, Val-268, and Ser-342 to Gly-343.

Belongs to the asparagine synthetase family.

The catalysed reaction is L-aspartate + L-glutamine + ATP + H2O = L-asparagine + L-glutamate + AMP + diphosphate + H(+). The protein operates within amino-acid biosynthesis; L-asparagine biosynthesis; L-asparagine from L-aspartate (L-Gln route): step 1/1. The protein is Asparagine synthetase [glutamine-hydrolyzing] of Brassica oleracea (Wild cabbage).